A 286-amino-acid chain; its full sequence is Octanoyltransferase (286 aa).

The region spanning 50-278 is the BPL/LPL catalytic domain; it reads LRTPDELWIV…NIAQRHAGVI (229 aa). Substrate is bound by residues 89–96, 190–192, and 203–205; these read RGGQVTWH, SLG, and GVA. The active-site Acyl-thioester intermediate is the C221.

This sequence belongs to the LipB family.

The protein resides in the cytoplasm. The catalysed reaction is octanoyl-[ACP] + L-lysyl-[protein] = N(6)-octanoyl-L-lysyl-[protein] + holo-[ACP] + H(+). Its pathway is protein modification; protein lipoylation via endogenous pathway; protein N(6)-(lipoyl)lysine from octanoyl-[acyl-carrier-protein]: step 1/2. Its function is as follows. Catalyzes the transfer of endogenously produced octanoic acid from octanoyl-acyl-carrier-protein onto the lipoyl domains of lipoate-dependent enzymes. Lipoyl-ACP can also act as a substrate although octanoyl-ACP is likely to be the physiological substrate. The polypeptide is Octanoyltransferase (Psychrobacter arcticus (strain DSM 17307 / VKM B-2377 / 273-4)).